A 476-amino-acid polypeptide reads, in one-letter code: uncharacterized protein (476 aa).

The stretch at 147-204 (DVRLAELRRRRAELEAEIAAVEAGDIAVLDPTAVRDRYQQLSTTARELLSDFREVEEN) forms a coiled coil.

This is an uncharacterized protein from Mycolicibacterium smegmatis (strain ATCC 700084 / mc(2)155) (Mycobacterium smegmatis).